A 740-amino-acid chain; its full sequence is DNA (cytosine-5)-methyltransferase 3C (740 aa).

Disordered stretches follow at residues 75–99 and 248–312; these read LTGDGDEDRDGEVGGSSGSGTPVMP and FKPT…DVTN. One can recognise an ADD domain in the interval 309-441; that stretch reads DVTNNKGNLE…LQDFFTTDPD (133 aa). The GATA-type; atypical zinc-finger motif lies at 320 to 350; it reads HCLSCGRKDPVSFHPLFEGGLCQSCRDRFLE. The PHD-type; atypical zinc finger occupies 361-417; the sequence is QSYCTVCCEGRELLLCSNTSCCRCFCVECLEVLVGAGTAEDVKLQEPWSCYMCLPQR. The region spanning 462-740 is the SAM-dependent MTase C5-type domain; sequence IRVLSLFDGI…APLKDHFACE (279 aa). S-adenosyl-L-methionine-binding residues include isoleucine 471, threonine 473, glutamate 492, aspartate 514, and isoleucine 515. The active site involves cysteine 538. Arginine 719 and tryptophan 721 together coordinate S-adenosyl-L-methionine.

This sequence belongs to the class I-like SAM-binding methyltransferase superfamily. C5-methyltransferase family. In terms of assembly, homodimer. Interacts with DNMT3L. Interacts with SPOCD1; recruiting Dnmt3C to transposons. In terms of tissue distribution, specifically expressed in testis.

The protein localises to the nucleus. It carries out the reaction a 2'-deoxycytidine in DNA + S-adenosyl-L-methionine = a 5-methyl-2'-deoxycytidine in DNA + S-adenosyl-L-homocysteine + H(+). Its function is as follows. DNA methyltransferase that specifically methylates the promoters of evolutionarily young retrotransposons in the male germline. De novo methylation and subsequent repression of transposable elements prevents their mobilization, which is essential for germline integrity. Compared to Dnmt3a and Dnmt3b, shows lower DNA methyltransferase efficiency. This is DNA (cytosine-5)-methyltransferase 3C from Mus musculus (Mouse).